Consider the following 569-residue polypeptide: Carotenoid cleavage dioxygenase 8 homolog B, chloroplastic (569 aa).

The transit peptide at 1–43 (MSPAMLQASSLCVSAALSGAASRPGRLASQGHQGKRAVAQPLA) directs the protein to the chloroplast. The segment at 23–81 (RPGRLASQGHQGKRAVAQPLAASAVTEAAPPAPVVAPPARPVDAPRRRGGRGGGGGGGE) is disordered. Positions 52 to 62 (PPAPVVAPPAR) are enriched in pro residues. Fe cation contacts are provided by H251, H301, H368, and H558.

Belongs to the carotenoid oxygenase family. Requires Fe(2+) as cofactor. Expressed in parenchyma cells of the root stele, shoot apex, leaf buds, xylem parenchyma cells of the stem, inflorescences and panicles.

The protein localises to the plastid. It is found in the chloroplast. It carries out the reaction 9-cis-10'-apo-beta-carotenal + 2 O2 = (2E,4E,6E)-7-hydroxy-4-methylhepta-2,4,6-trienal + (11R)-carlactone. The catalysed reaction is all-trans-10'-apo-beta-carotenal + O2 = (2E,4E,6E)-4-methylocta-2,4,6-trienedial + 13-apo-beta-carotenone. Involved in strigolactones biosynthesis by cleaving the C(27) 9-cis-10'-apo-beta-carotenal produced by CCD7. Produces the C(19) carlactone and a C(8) hydroxyaldehyde. Also shows lower activity with all-trans-10'-apo-beta-carotenal producing a C(9) dialdehyde and the C(18) 13-apo-beta-carotenone. Strigolactones are hormones that inhibit tillering and shoot branching through the MAX-dependent pathway, contribute to the regulation of shoot architectural response to phosphate-limiting conditions and function as rhizosphere signal that stimulates hyphal branching of arbuscular mycorrhizal fungi and trigger seed germination of root parasitic weeds. The polypeptide is Carotenoid cleavage dioxygenase 8 homolog B, chloroplastic (CCD8B) (Oryza sativa subsp. japonica (Rice)).